The sequence spans 417 residues: Odorant receptor 65a (417 aa).

The Cytoplasmic segment spans residues 1–62 (MTELRSERKN…MNSEQRRLPR (62 aa)). The helical transmembrane segment at 63 to 83 (IVAWQYFVSIQLATALASLFY) threads the bilayer. Over 84–98 (GISESIGDIVNLGRD) the chain is Extracellular. Residues 99–119 (LVFIITIIFICFRLVFFAQYA) form a helical membrane-spanning segment. Over 120-152 (GELDVIIDALEDIYHWSIKGPATKEVQETKRLH) the chain is Cytoplasmic. Residues 153 to 173 (FLLFMALIITWFSFLILFMLI) traverse the membrane as a helical segment. The Extracellular portion of the chain corresponds to 174–206 (KISTPFWIESQTLPFHVSWPFQLHDPSKHPIAY). The helical transmembrane segment at 207–227 (IIIFVSQSTTMLYFLIWLGVV) threads the bilayer. Residues 228–290 (ENMGVSLFFE…TDRCNHIFNG (63 aa)) lie on the Cytoplasmic side of the membrane. Residues 291–311 (AFIMQMLINFLLVSLSLFEVL) traverse the membrane as a helical segment. Over 312 to 316 (AAKKN) the chain is Extracellular. A helical membrane pass occupies residues 317 to 337 (PQVAVEYMIIMLMTLGHLSFW). At 338–393 (SKFGDMFSKESEQVALAVYEAYDPNVGSKSIHRQFCFFIQRAQKPLIMKASPFPPF) the chain is on the cytoplasmic side. The helical transmembrane segment at 394–414 (NLENYMFILKQCYSILTILAN) threads the bilayer. Topologically, residues 415-417 (TLE) are extracellular.

It belongs to the insect chemoreceptor superfamily. Heteromeric odorant receptor channel (TC 1.A.69) family. Or49a subfamily. Interacts with Orco. Complexes exist early in the endomembrane system in olfactory sensory neurons (OSNs), coupling these complexes to the conserved ciliary trafficking pathway. In terms of tissue distribution, expressed in olfactory sensory neurons in the antenna.

It is found in the cell membrane. In terms of biological role, odorant receptor which mediates acceptance or avoidance behavior, depending on its substrates. The odorant receptor repertoire encodes a large collection of odor stimuli that vary widely in identity, intensity, and duration. May form a complex with Orco to form odorant-sensing units, providing sensitive and prolonged odorant signaling and calcium permeability. Involved in olfactory communication for modulating aggression through the sensing of the male-specific pheromone 11-cis-vaccenyl acetate (cVA). Although acute exposure to cVA elicites aggression through Or67d olfactory receptor neurons (ORNs), chronic cVA exposure reduces aggression through Or65a ORNs. Moreover, cVA leads to generalized learning with mated females. It is a major component of the male cuticular hydrocarbon profile, but it is not found on virgin females. During copulation, cVA is transferred to the female in ejaculate along with sperm and peptides that decrease her sexual receptivity. The protein is Odorant receptor 65a (Or65a) of Drosophila melanogaster (Fruit fly).